The following is an 843-amino-acid chain: Glycogen phosphorylase, brain form (843 aa).

Ala2 bears the N-acetylalanine mark. Residue Ser15 is modified to Phosphoserine; by PHK; in form phosphorylase A. AMP-binding residues include Asp43, Tyr197, and Arg310. Residue Tyr197 is modified to Phosphotyrosine. Tyr473 carries the post-translational modification Phosphotyrosine. Pyridoxal 5'-phosphate is bound at residue Lys569. The interval 677–678 is pyridoxal 5'-phosphate; sequence TG. Lys681 is subject to N6-(pyridoxal phosphate)lysine.

The protein belongs to the glycogen phosphorylase family. Homodimer. Dimers associate into a tetramer to form the enzymatically active phosphorylase A. Requires pyridoxal 5'-phosphate as cofactor. In terms of processing, phosphorylated. Phosphorylation of Ser-15 converts phosphorylase B (unphosphorylated) to phosphorylase A.

It carries out the reaction [(1-&gt;4)-alpha-D-glucosyl](n) + phosphate = [(1-&gt;4)-alpha-D-glucosyl](n-1) + alpha-D-glucose 1-phosphate. Its activity is regulated as follows. Activity of phosphorylase is controlled both by allosteric means (through the non-covalent binding of metabolites) and by covalent modification. Thus AMP allosterically activates, whereas ATP, ADP, and glucose-6-phosphate allosterically inhibit, phosphorylase B. Activated upon phosphorylation. Glycogen phosphorylase that regulates glycogen mobilization. Phosphorylase is an important allosteric enzyme in carbohydrate metabolism. Enzymes from different sources differ in their regulatory mechanisms and in their natural substrates. However, all known phosphorylases share catalytic and structural properties. This Homo sapiens (Human) protein is Glycogen phosphorylase, brain form.